A 583-amino-acid polypeptide reads, in one-letter code: Vivapain-1 (583 aa).

Residues 1–34 lie on the Cytoplasmic side of the membrane; the sequence is MAQDIKIMNLTKSSLEALNRNQMLSKKSSRKILK. Positions 1 to 338 are cleaved as a propeptide — activation peptide; it reads MAQDIKIMNL…SSSGANLLAD (338 aa). The chain crosses the membrane as a helical; Signal-anchor for type II membrane protein span at residues 35-55; sequence ICMYAILTFAMCGVVLICLTA. Topologically, residues 56 to 583 are lumenal; the sequence is MSNSDGSLTQ…IGVEVFYPIL (528 aa). Residues 62 to 82 are compositionally biased toward polar residues; that stretch reads SLTQSGSHNQSGSLKGLSSTP. Disordered regions lie at residues 62-83 and 104-125; these read SLTQSGSHNQSGSLKGLSSTPG and PHGNRDPTGDDVEKPADAALPN. A glycan (N-linked (GlcNAc...) asparagine) is linked at Asn70. Over residues 106 to 119 the composition is skewed to basic and acidic residues; that stretch reads GNRDPTGDDVEKPA. N-linked (GlcNAc...) asparagine glycosylation is found at Asn195 and Asn272. Disulfide bonds link Cys360–Cys402, Cys395–Cys435, and Cys420–Cys440. Residue Cys363 is part of the active site. Asn381 is a glycosylation site (N-linked (GlcNAc...) asparagine). Residues Asn486 and Asn494 are each glycosylated (N-linked (GlcNAc...) asparagine). Cysteines 489 and 572 form a disulfide. Catalysis depends on residues His495 and Asn547.

Belongs to the peptidase C1 family.

It is found in the membrane. In terms of biological role, cysteine protease. The chain is Vivapain-1 from Plasmodium vivax (strain Salvador I).